A 457-amino-acid polypeptide reads, in one-letter code: Adenylyltransferase and sulfurtransferase MOCS3 (457 aa).

Residues 40–60 (ANGGGNGDGLADEGGERNTGT) form a disordered region. Residue Thr63 is modified to Phosphothreonine. Residues Gly102, Asp123, 130-134 (SNFHR), Lys147, and 191-192 (DN) contribute to the ATP site. Zn(2+)-binding residues include Cys233 and Cys236. Cys250 functions as the Glycyl thioester intermediate; for adenylyltransferase activity in the catalytic mechanism. Residues Cys309 and Cys312 each coordinate Zn(2+). Positions 358–455 (ESQPHLLFDV…WTRKVDPDFP (98 aa)) constitute a Rhodanese domain. Cys414 acts as the Cysteine persulfide intermediate; for sulfurtransferase activity in catalysis.

In the N-terminal section; belongs to the HesA/MoeB/ThiF family. UBA4 subfamily. Zn(2+) is required as a cofactor.

It is found in the cytoplasm. It localises to the cytosol. The catalysed reaction is [molybdopterin-synthase sulfur-carrier protein]-C-terminal Gly-Gly + ATP + H(+) = [molybdopterin-synthase sulfur-carrier protein]-C-terminal Gly-Gly-AMP + diphosphate. The enzyme catalyses [molybdopterin-synthase sulfur-carrier protein]-C-terminal Gly-Gly-AMP + S-sulfanyl-L-cysteinyl-[cysteine desulfurase] + AH2 = [molybdopterin-synthase sulfur-carrier protein]-C-terminal-Gly-aminoethanethioate + L-cysteinyl-[cysteine desulfurase] + A + AMP + 2 H(+). It participates in tRNA modification; 5-methoxycarbonylmethyl-2-thiouridine-tRNA biosynthesis. It functions in the pathway cofactor biosynthesis; molybdopterin biosynthesis. Its function is as follows. Plays a central role in 2-thiolation of mcm(5)S(2)U at tRNA wobble positions of cytosolic tRNA(Lys), tRNA(Glu) and tRNA(Gln). Also essential during biosynthesis of the molybdenum cofactor. Acts by mediating the C-terminal thiocarboxylation of sulfur carriers URM1 and MOCS2A. Its N-terminus first activates URM1 and MOCS2A as acyl-adenylates (-COAMP), then the persulfide sulfur on the catalytic cysteine is transferred to URM1 and MOCS2A to form thiocarboxylation (-COSH) of their C-terminus. The reaction probably involves hydrogen sulfide that is generated from the persulfide intermediate and that acts as a nucleophile towards URM1 and MOCS2A. Subsequently, a transient disulfide bond is formed. Does not use thiosulfate as sulfur donor; NFS1 probably acting as a sulfur donor for thiocarboxylation reactions. The protein is Adenylyltransferase and sulfurtransferase MOCS3 of Drosophila willistoni (Fruit fly).